Here is a 1638-residue protein sequence, read N- to C-terminus: DNA polymerase III PolC-type (1638 aa).

Positions S193–K212 are disordered. Basic and acidic residues predominate over residues E194–K212. The Exonuclease domain maps to Y596–L752.

The protein belongs to the DNA polymerase type-C family. PolC subfamily.

It localises to the cytoplasm. It catalyses the reaction DNA(n) + a 2'-deoxyribonucleoside 5'-triphosphate = DNA(n+1) + diphosphate. Required for replicative DNA synthesis. This DNA polymerase also exhibits 3' to 5' exonuclease activity. This chain is DNA polymerase III PolC-type, found in Lactococcus lactis subsp. lactis (strain IL1403) (Streptococcus lactis).